The sequence spans 379 residues: UDP-4-amino-4-deoxy-L-arabinose--oxoglutarate aminotransferase (379 aa).

Residue Lys182 is modified to N6-(pyridoxal phosphate)lysine.

It belongs to the DegT/DnrJ/EryC1 family. ArnB subfamily. Homodimer. Pyridoxal 5'-phosphate is required as a cofactor.

The enzyme catalyses UDP-4-amino-4-deoxy-beta-L-arabinose + 2-oxoglutarate = UDP-beta-L-threo-pentopyranos-4-ulose + L-glutamate. It functions in the pathway nucleotide-sugar biosynthesis; UDP-4-deoxy-4-formamido-beta-L-arabinose biosynthesis; UDP-4-deoxy-4-formamido-beta-L-arabinose from UDP-alpha-D-glucuronate: step 2/3. Its pathway is bacterial outer membrane biogenesis; lipopolysaccharide biosynthesis. Its function is as follows. Catalyzes the conversion of UDP-4-keto-arabinose (UDP-Ara4O) to UDP-4-amino-4-deoxy-L-arabinose (UDP-L-Ara4N). The modified arabinose is attached to lipid A and is required for resistance to polymyxin and cationic antimicrobial peptides. This is UDP-4-amino-4-deoxy-L-arabinose--oxoglutarate aminotransferase from Escherichia coli O127:H6 (strain E2348/69 / EPEC).